We begin with the raw amino-acid sequence, 558 residues long: Arginine--tRNA ligase (558 aa).

Positions 119–129 (PNIAKPMSMGH) match the 'HIGH' region motif.

The protein belongs to the class-I aminoacyl-tRNA synthetase family. As to quaternary structure, monomer.

The protein resides in the cytoplasm. The catalysed reaction is tRNA(Arg) + L-arginine + ATP = L-arginyl-tRNA(Arg) + AMP + diphosphate. The protein is Arginine--tRNA ligase of Lactobacillus johnsonii (strain CNCM I-12250 / La1 / NCC 533).